The primary structure comprises 236 residues: Oligogalacturonate-specific porin KdgM (236 aa).

An N-terminal signal peptide occupies residues 1–20 (MKIKLLTLAVASLVSVNALA).

It belongs to the oligogalacturonate-specific porin KdgM (TC 1.B.35) family. Monomer.

It localises to the cell outer membrane. Functionally, porin specific for oligogalacturonides. Also required for full virulence. The sequence is that of Oligogalacturonate-specific porin KdgM (kdgM) from Dickeya dadantii (strain 3937) (Erwinia chrysanthemi (strain 3937)).